The sequence spans 320 residues: Cytochrome f (320 aa).

The signal sequence occupies residues 1-35 (MENRNTFSWVKEQITRSISVSIMIYVITRTSISNA). Residues Tyr36, Cys56, Cys59, and His60 each contribute to the heme site. The helical transmembrane segment at 286-305 (VQGLLFFFASVILAQVFLVL) threads the bilayer.

The protein belongs to the cytochrome f family. As to quaternary structure, the 4 large subunits of the cytochrome b6-f complex are cytochrome b6, subunit IV (17 kDa polypeptide, petD), cytochrome f and the Rieske protein, while the 4 small subunits are PetG, PetL, PetM and PetN. The complex functions as a dimer. Heme is required as a cofactor.

The protein resides in the plastid. It localises to the chloroplast thylakoid membrane. In terms of biological role, component of the cytochrome b6-f complex, which mediates electron transfer between photosystem II (PSII) and photosystem I (PSI), cyclic electron flow around PSI, and state transitions. In Triticum aestivum (Wheat), this protein is Cytochrome f (petA).